Here is a 400-residue protein sequence, read N- to C-terminus: Nicotinate phosphoribosyltransferase (400 aa).

At H220 the chain carries Phosphohistidine; by autocatalysis.

This sequence belongs to the NAPRTase family. Transiently phosphorylated on a His residue during the reaction cycle. Phosphorylation strongly increases the affinity for substrates and increases the rate of nicotinate D-ribonucleotide production. Dephosphorylation regenerates the low-affinity form of the enzyme, leading to product release.

It carries out the reaction nicotinate + 5-phospho-alpha-D-ribose 1-diphosphate + ATP + H2O = nicotinate beta-D-ribonucleotide + ADP + phosphate + diphosphate. It functions in the pathway cofactor biosynthesis; NAD(+) biosynthesis; nicotinate D-ribonucleotide from nicotinate: step 1/1. Catalyzes the synthesis of beta-nicotinate D-ribonucleotide from nicotinate and 5-phospho-D-ribose 1-phosphate at the expense of ATP. The polypeptide is Nicotinate phosphoribosyltransferase (Salmonella schwarzengrund (strain CVM19633)).